The primary structure comprises 396 residues: Trypacidin cluster transcription factor (396 aa).

Residues 20–47 (CRACGLSKVRCSKEKPTCSRCRRRGTVC) constitute a DNA-binding region (zn(2)-C6 fungal-type). 3 disordered regions span residues 54–120 (RPGR…LSTV), 190–218 (DPAP…ESEA), and 346–365 (MHGA…PAPL). Residues 57-71 (RKPDSRSEVEPEPGH) are compositionally biased toward basic and acidic residues. Residues 72–82 (LSHPLPSPESS) are compositionally biased toward low complexity.

Specifically expressed in conidia.

The protein resides in the nucleus. In terms of biological role, transcription factor that regulates the expression of the gene clusters that mediate the biosynthesis of trypacidin, a metabolite with antiprotozoal activity and a possible role in the infection process. Trypacidin is toxic for human pulmonary and bronchial epithelial cells by initiating the intracellular formation of nitric oxide (NO) and hydrogen peroxide (H(2)O(2)), thus triggering host necrotic cell death. The protein is Trypacidin cluster transcription factor of Aspergillus fumigatus (strain ATCC MYA-4609 / CBS 101355 / FGSC A1100 / Af293) (Neosartorya fumigata).